Here is a 181-residue protein sequence, read N- to C-terminus: ATP synthase subunit delta (181 aa).

This sequence belongs to the ATPase delta chain family. F-type ATPases have 2 components, F(1) - the catalytic core - and F(0) - the membrane proton channel. F(1) has five subunits: alpha(3), beta(3), gamma(1), delta(1), epsilon(1). F(0) has three main subunits: a(1), b(2) and c(10-14). The alpha and beta chains form an alternating ring which encloses part of the gamma chain. F(1) is attached to F(0) by a central stalk formed by the gamma and epsilon chains, while a peripheral stalk is formed by the delta and b chains.

It is found in the cell inner membrane. F(1)F(0) ATP synthase produces ATP from ADP in the presence of a proton or sodium gradient. F-type ATPases consist of two structural domains, F(1) containing the extramembraneous catalytic core and F(0) containing the membrane proton channel, linked together by a central stalk and a peripheral stalk. During catalysis, ATP synthesis in the catalytic domain of F(1) is coupled via a rotary mechanism of the central stalk subunits to proton translocation. Functionally, this protein is part of the stalk that links CF(0) to CF(1). It either transmits conformational changes from CF(0) to CF(1) or is implicated in proton conduction. This chain is ATP synthase subunit delta, found in Protochlamydia amoebophila (strain UWE25).